A 194-amino-acid chain; its full sequence is GTP cyclohydrolase 1 (194 aa).

Cys83, His86, and Cys155 together coordinate Zn(2+).

Belongs to the GTP cyclohydrolase I family. As to quaternary structure, toroid-shaped homodecamer, composed of two pentamers of five dimers.

The enzyme catalyses GTP + H2O = 7,8-dihydroneopterin 3'-triphosphate + formate + H(+). The protein operates within cofactor biosynthesis; 7,8-dihydroneopterin triphosphate biosynthesis; 7,8-dihydroneopterin triphosphate from GTP: step 1/1. The chain is GTP cyclohydrolase 1 (folE) from Streptococcus pyogenes serotype M1.